A 405-amino-acid polypeptide reads, in one-letter code: Formin-like protein 15a (405 aa).

The segment at 1 to 31 (MSLVEISGSDAMAAPMPGRVPPPPPRPPPMP) is disordered. Positions 18 to 31 (GRVPPPPPRPPPMP) are enriched in pro residues. The FH2 domain occupies 52–405 (FPRPAKKRAS…VCWFFVRLMI (354 aa)).

The protein belongs to the formin-like family. Class-II subfamily.

This Arabidopsis thaliana (Mouse-ear cress) protein is Formin-like protein 15a (FH15A).